The following is a 589-amino-acid chain: Protein FAM161B (589 aa).

Disordered stretches follow at residues 1-166 (MTVG…VCSW), 265-297 (KKEQ…RKIP), and 386-444 (AERR…GLAS). Acidic residues predominate over residues 92–106 (PDSDLNDAEDEEDLE). Residues 151–166 (TSDSGPPSQHRSVCSW) show a composition bias toward polar residues. Residues 265–275 (KKEQQKEDAPQ) are compositionally biased toward basic and acidic residues. Residues 287 to 297 (SPKKATSRKIP) show a composition bias toward basic residues. Basic and acidic residues predominate over residues 386–396 (AERRETRETTR). Residues 510-577 (EEVFKAKLKE…ALKQAGLEEE (68 aa)) are a coiled coil.

This sequence belongs to the FAM161 family. As to quaternary structure, interacts with FAM161A.

This chain is Protein FAM161B (Fam161b), found in Mus musculus (Mouse).